A 243-amino-acid chain; its full sequence is Ubiquinone/menaquinone biosynthesis C-methyltransferase UbiE (243 aa).

Residues Thr69, Asp90, and 116-117 contribute to the S-adenosyl-L-methionine site; that span reads DA.

Belongs to the class I-like SAM-binding methyltransferase superfamily. MenG/UbiE family.

It catalyses the reaction a 2-demethylmenaquinol + S-adenosyl-L-methionine = a menaquinol + S-adenosyl-L-homocysteine + H(+). It carries out the reaction a 2-methoxy-6-(all-trans-polyprenyl)benzene-1,4-diol + S-adenosyl-L-methionine = a 5-methoxy-2-methyl-3-(all-trans-polyprenyl)benzene-1,4-diol + S-adenosyl-L-homocysteine + H(+). It participates in quinol/quinone metabolism; menaquinone biosynthesis; menaquinol from 1,4-dihydroxy-2-naphthoate: step 2/2. Its pathway is cofactor biosynthesis; ubiquinone biosynthesis. Functionally, methyltransferase required for the conversion of demethylmenaquinol (DMKH2) to menaquinol (MKH2) and the conversion of 2-polyprenyl-6-methoxy-1,4-benzoquinol (DDMQH2) to 2-polyprenyl-3-methyl-6-methoxy-1,4-benzoquinol (DMQH2). This chain is Ubiquinone/menaquinone biosynthesis C-methyltransferase UbiE, found in Cupriavidus necator (strain ATCC 17699 / DSM 428 / KCTC 22496 / NCIMB 10442 / H16 / Stanier 337) (Ralstonia eutropha).